A 374-amino-acid chain; its full sequence is MGKGEFTFNLLCCYNREAETLTNKPVKLLIAASGTGGHLFPAIAIANQLKDYHIEWLGVPDRLETKLIPSQYPLHTISVEGFQQKLGIETLKVLSRLIGSILKVRHILKEGKFQGLFTTGGYIAAPAIIAARYLGLPVILHESNVLPGKVTRWFSRLCNVVAVGFEEGTKYLSFEKTVYLGTPVREEFLFPQSLDLPIPENVPVIVIVGGSQGAVAINQLVRKCIPAWVENGAWIIHQTGENDPNAFSLKHPQYFTLPFYHNMASLFQRANLVISRAGAGSLTELAVTHTPSILIPYPYAADNHQAYNAKIFSNQNAALVFTEGELTPEKLQTEVLELLQSSEKLEKMSLGAESLAVKDSHKKLAGLVHEILSH.

UDP-N-acetyl-alpha-D-glucosamine contacts are provided by residues 35-37 (TGG), N144, R185, S211, and Q305.

The protein belongs to the glycosyltransferase 28 family. MurG subfamily.

The protein localises to the cell inner membrane. The enzyme catalyses di-trans,octa-cis-undecaprenyl diphospho-N-acetyl-alpha-D-muramoyl-L-alanyl-D-glutamyl-meso-2,6-diaminopimeloyl-D-alanyl-D-alanine + UDP-N-acetyl-alpha-D-glucosamine = di-trans,octa-cis-undecaprenyl diphospho-[N-acetyl-alpha-D-glucosaminyl-(1-&gt;4)]-N-acetyl-alpha-D-muramoyl-L-alanyl-D-glutamyl-meso-2,6-diaminopimeloyl-D-alanyl-D-alanine + UDP + H(+). Its pathway is cell wall biogenesis; peptidoglycan biosynthesis. Cell wall formation. Catalyzes the transfer of a GlcNAc subunit on undecaprenyl-pyrophosphoryl-MurNAc-pentapeptide (lipid intermediate I) to form undecaprenyl-pyrophosphoryl-MurNAc-(pentapeptide)GlcNAc (lipid intermediate II). This chain is UDP-N-acetylglucosamine--N-acetylmuramyl-(pentapeptide) pyrophosphoryl-undecaprenol N-acetylglucosamine transferase, found in Trichodesmium erythraeum (strain IMS101).